The chain runs to 209 residues: A-type ATP synthase subunit D (209 aa).

The protein belongs to the V-ATPase D subunit family. As to quaternary structure, has multiple subunits with at least A(3), B(3), C, D, E, F, H, I and proteolipid K(x).

It is found in the cell membrane. Component of the A-type ATP synthase that produces ATP from ADP in the presence of a proton gradient across the membrane. The sequence is that of A-type ATP synthase subunit D from Methanoregula boonei (strain DSM 21154 / JCM 14090 / 6A8).